Here is a 573-residue protein sequence, read N- to C-terminus: MTQLSRERYAALYGPTTGDRIRLADTDLLIEITEDRSGGPGLAGDEAVFGGGKVLRESMGQSRVTRADGAPDTVITGAVILDYWGIIKADIGIRDGRITAIGKAGNPDIMTGVHPGLVVGPSTEIIAGNGRIVTAGAIDCHVHLICPQIMAEALGGGITTIVAGGTGPAEGSKATTVTPGAWHLARMLEALDTWPLNIALLGKGNTVSAEAMWEQLRGGAAGFKLHEDWGTTPAAIDACLTVCDAAGVQANIHTDTLNEAGFVEHTLAAIKGRSIHAYHTEGAGGGHAPDIITVAGHPNVLPSSTNPTRPHTVNTLDEHLDMLMVCHHLNPSVPEDLAFAESRIRPSTIAAEDLLHDIGAISMIGSDAQAMGRIGEVVMRTWQTAHVMKRRRGFLPGDTKADNARAKRYVAKYTICPAVAHGLDGEIGSVEVGKLADLVLWEPAFFGVRPHAVVKGGMIAWAAMGDANASIPTPQPVLPRPMFGAAPAAAAATSVHFVAPQAIEDGLADRIAVNRKLVAVGNVRGVGKAQMPLNDATPDIEVDPDTFTVRIDGEVWQEQPATELPMAQRYFLF.

The 438-residue stretch at 136–573 (GAIDCHVHLI…LPMAQRYFLF (438 aa)) folds into the Urease domain. The Ni(2+) site is built by His141, His143, and Lys224. An N6-carboxylysine modification is found at Lys224. His226 provides a ligand contact to substrate. 2 residues coordinate Ni(2+): His253 and His279. Residue His327 is the Proton donor of the active site. Asp367 provides a ligand contact to Ni(2+).

It belongs to the metallo-dependent hydrolases superfamily. Urease alpha subunit family. Heterotrimer of UreA (gamma), UreB (beta) and UreC (alpha) subunits. Three heterotrimers associate to form the active enzyme. Requires Ni cation as cofactor. Post-translationally, carboxylation allows a single lysine to coordinate two nickel ions.

The protein resides in the cytoplasm. The enzyme catalyses urea + 2 H2O + H(+) = hydrogencarbonate + 2 NH4(+). The protein operates within nitrogen metabolism; urea degradation; CO(2) and NH(3) from urea (urease route): step 1/1. The protein is Urease subunit alpha of Mycolicibacterium vanbaalenii (strain DSM 7251 / JCM 13017 / BCRC 16820 / KCTC 9966 / NRRL B-24157 / PYR-1) (Mycobacterium vanbaalenii).